Here is a 222-residue protein sequence, read N- to C-terminus: Cysteine protease inhibitor 1 (222 aa).

The signal sequence occupies residues 1-26 (MKSINILSFLLLSSTLSLVAFARSFT). Residues 27-42 (SENPIVLPTTCHDDDN) constitute a propeptide that is removed on maturation. Residues 29 to 34 (NPIVLP) carry the Vacuolar targeting signal motif. Intrachain disulfides connect cysteine 84/cysteine 136 and cysteine 185/cysteine 191.

The protein belongs to the protease inhibitor I3 (leguminous Kunitz-type inhibitor) family. Tubers, leaves.

It is found in the vacuole. Potent inhibitor of cathepsin l (cysteine protease). Does not inhibit trypsin or chymotrypsin (serine proteases). May protect the plant by inhibiting proteases of invading organisms. The sequence is that of Cysteine protease inhibitor 1 from Solanum tuberosum (Potato).